The chain runs to 859 residues: Leucine--tRNA ligase (859 aa).

The 'HIGH' region motif lies at 42–52 (PYPSGKLHVGH). Residues 611 to 615 (KMSKS) carry the 'KMSKS' region motif. ATP is bound at residue Lys-614.

The protein belongs to the class-I aminoacyl-tRNA synthetase family.

The protein localises to the cytoplasm. It carries out the reaction tRNA(Leu) + L-leucine + ATP = L-leucyl-tRNA(Leu) + AMP + diphosphate. In Fusobacterium nucleatum subsp. nucleatum (strain ATCC 25586 / DSM 15643 / BCRC 10681 / CIP 101130 / JCM 8532 / KCTC 2640 / LMG 13131 / VPI 4355), this protein is Leucine--tRNA ligase.